The primary structure comprises 193 residues: Holliday junction branch migration complex subunit RuvA (193 aa).

The interval 1–63 is domain I; that stretch reads MIGKLTGTVT…ENINKLYGFE (63 aa). The domain II stretch occupies residues 64–148; sequence CRKSQEVARM…GIASSTNVHI (85 aa). Residues 149 to 150 are flexible linker; that stretch reads AS. Residues 150 to 193 form a domain III region; it reads SEAVSALVKLGFQHKPSHKVVMEIMTKRPAIEIAELITLALKML.

Belongs to the RuvA family. In terms of assembly, homotetramer. Forms an RuvA(8)-RuvB(12)-Holliday junction (HJ) complex. HJ DNA is sandwiched between 2 RuvA tetramers; dsDNA enters through RuvA and exits via RuvB. An RuvB hexamer assembles on each DNA strand where it exits the tetramer. Each RuvB hexamer is contacted by two RuvA subunits (via domain III) on 2 adjacent RuvB subunits; this complex drives branch migration. In the full resolvosome a probable DNA-RuvA(4)-RuvB(12)-RuvC(2) complex forms which resolves the HJ.

It localises to the cytoplasm. Functionally, the RuvA-RuvB-RuvC complex processes Holliday junction (HJ) DNA during genetic recombination and DNA repair, while the RuvA-RuvB complex plays an important role in the rescue of blocked DNA replication forks via replication fork reversal (RFR). RuvA specifically binds to HJ cruciform DNA, conferring on it an open structure. The RuvB hexamer acts as an ATP-dependent pump, pulling dsDNA into and through the RuvAB complex. HJ branch migration allows RuvC to scan DNA until it finds its consensus sequence, where it cleaves and resolves the cruciform DNA. The sequence is that of Holliday junction branch migration complex subunit RuvA from Neorickettsia sennetsu (strain ATCC VR-367 / Miyayama) (Ehrlichia sennetsu).